The primary structure comprises 422 residues: Protein phosphatase methylesterase 1 (422 aa).

The disordered stretch occupies residues 1 to 27; that stretch reads MSDMFRKSVLNKLPHLPPTRAPWADES. Residues Ser-207, Asp-234, and His-371 contribute to the active site.

This sequence belongs to the AB hydrolase superfamily.

The catalysed reaction is [phosphatase 2A protein]-C-terminal L-leucine methyl ester + H2O = [phosphatase 2A protein]-C-terminal L-leucine + methanol + H(+). Functionally, demethylates proteins that have been reversibly carboxymethylated. Demethylates the phosphatase PP2A catalytic subunit. This chain is Protein phosphatase methylesterase 1 (PPE1), found in Cryptococcus neoformans var. neoformans serotype D (strain B-3501A) (Filobasidiella neoformans).